Reading from the N-terminus, the 620-residue chain is Probable protein arginine N-methyltransferase 3 (620 aa).

A compositionally biased stretch (basic and acidic residues) spans 1 to 17 (MATREHELRPEQERLGE). Positions 1 to 45 (MATREHELRPEQERLGEDREEYEDGEEEEEEGEEGWDDWESDGDD) are disordered. A compositionally biased stretch (acidic residues) spans 18-45 (DREEYEDGEEEEEEGEEGWDDWESDGDD). The C2H2-type 1 zinc-finger motif lies at 55-78 (LLCLFCSARFDSESSLFSHCASEH). The C2H2-type 2; degenerate zinc-finger motif lies at 110–137 (NKCWSCGQVFSSNSELCGHLHALEIPQL). An SAM-dependent MTase PRMT-type domain is found at 253–582 (DESYFGSYSS…DECPAVMIRS (330 aa)). The S-adenosyl-L-homocysteine site is built by arginine 275, glycine 299, aspartate 321, serine 323, and glutamate 364. Active-site residues include glutamate 383 and glutamate 392.

The protein belongs to the class I-like SAM-binding methyltransferase superfamily. Protein arginine N-methyltransferase family.

The protein resides in the cytoplasm. The protein localises to the cytosol. It catalyses the reaction L-arginyl-[protein] + S-adenosyl-L-methionine = N(omega)-methyl-L-arginyl-[protein] + S-adenosyl-L-homocysteine + H(+). It carries out the reaction L-arginyl-[protein] + 2 S-adenosyl-L-methionine = N(omega),N(omega)-dimethyl-L-arginyl-[protein] + 2 S-adenosyl-L-homocysteine + 2 H(+). Functionally, protein-arginine N-methyltransferase that catalyzes both the monomethylation and asymmetric dimethylation of the guanidino nitrogens of arginine residues in target proteins, and therefore falls into the group of type I methyltransferases. The chain is Probable protein arginine N-methyltransferase 3 (PRMT3) from Oryza sativa subsp. japonica (Rice).